We begin with the raw amino-acid sequence, 360 residues long: Protein Wnt-2 (360 aa).

The signal sequence occupies residues Met-1–Ser-25. 11 disulfide bridges follow: Cys-76/Cys-87, Cys-127/Cys-135, Cys-137/Cys-157, Cys-206/Cys-220, Cys-208/Cys-215, Cys-278/Cys-309, Cys-294/Cys-304, Cys-308/Cys-348, Cys-324/Cys-339, Cys-326/Cys-336, and Cys-331/Cys-332. Ser-212 carries the O-palmitoleoyl serine; by PORCN lipid modification. N-linked (GlcNAc...) asparagine glycosylation is present at Asn-295.

Belongs to the Wnt family. Palmitoleoylation is required for efficient binding to frizzled receptors. Depalmitoleoylation leads to Wnt signaling pathway inhibition.

It is found in the secreted. It localises to the extracellular space. The protein localises to the extracellular matrix. In terms of biological role, ligand for members of the frizzled family of seven transmembrane receptors. Functions in the canonical Wnt signaling pathway that results in activation of transcription factors of the TCF/LEF family. Functions as a upstream regulator of FGF10 expression. Plays an important role in embryonic lung development. May contribute to embryonic brain development by regulating the proliferation of dopaminergic precursors and neurons. This is Protein Wnt-2 (WNT2) from Nomascus leucogenys (Northern white-cheeked gibbon).